We begin with the raw amino-acid sequence, 236 residues long: tRNA1(Val) (adenine(37)-N6)-methyltransferase (236 aa).

It belongs to the methyltransferase superfamily. tRNA (adenine-N(6)-)-methyltransferase family.

It is found in the cytoplasm. It carries out the reaction adenosine(37) in tRNA1(Val) + S-adenosyl-L-methionine = N(6)-methyladenosine(37) in tRNA1(Val) + S-adenosyl-L-homocysteine + H(+). Specifically methylates the adenine in position 37 of tRNA(1)(Val) (anticodon cmo5UAC). The protein is tRNA1(Val) (adenine(37)-N6)-methyltransferase of Aeromonas salmonicida (strain A449).